Reading from the N-terminus, the 323-residue chain is MSHLPPAIFLMGPTASGKTDLALELARVLPCELISVDSALVYRGMDIGTAKPAKALLAEFPHRLIDIRDPAESYSAAEFRDDALAAMAEISARGRIPLLVGGTMLYYKALLEGLADMPSADPALRAELEARGAAEGWAALHRELATVDPESAARIHPNDPQRLVRALEVYRVSGLSMTAHRLRQVAQNPLSDRSAGEHLPYTVVHLAIAPTQRQILHERIARRFRLMLEQGFVDEVELLWRRGDLHASLPSMRAVGYRQVWEYLDGLLTREQMVERGIIATRQLAKRQFTWLRNWTDLHWLDSLGDDNLQRTLKYLETAAILA.

ATP is bound at residue 12-19 (GPTASGKT). 14–19 (TASGKT) lines the substrate pocket. Interaction with substrate tRNA stretches follow at residues 37–40 (DSAL) and 161–165 (QRLVR).

Belongs to the IPP transferase family. In terms of assembly, monomer. Mg(2+) is required as a cofactor.

It carries out the reaction adenosine(37) in tRNA + dimethylallyl diphosphate = N(6)-dimethylallyladenosine(37) in tRNA + diphosphate. Its function is as follows. Catalyzes the transfer of a dimethylallyl group onto the adenine at position 37 in tRNAs that read codons beginning with uridine, leading to the formation of N6-(dimethylallyl)adenosine (i(6)A). This chain is tRNA dimethylallyltransferase, found in Azotobacter vinelandii (strain DJ / ATCC BAA-1303).